A 443-amino-acid chain; its full sequence is Tol-Pal system protein TolB (443 aa).

The first 33 residues, 1–33, serve as a signal peptide directing secretion; sequence MKIGIINTKIRTVFSAFACMIAASLVCTMPARA.

This sequence belongs to the TolB family. In terms of assembly, the Tol-Pal system is composed of five core proteins: the inner membrane proteins TolA, TolQ and TolR, the periplasmic protein TolB and the outer membrane protein Pal. They form a network linking the inner and outer membranes and the peptidoglycan layer.

The protein localises to the periplasm. Part of the Tol-Pal system, which plays a role in outer membrane invagination during cell division and is important for maintaining outer membrane integrity. This Brucella ovis (strain ATCC 25840 / 63/290 / NCTC 10512) protein is Tol-Pal system protein TolB.